The primary structure comprises 179 residues: Large ribosomal subunit protein uL5 (179 aa).

The protein belongs to the universal ribosomal protein uL5 family. Part of the 50S ribosomal subunit; part of the 5S rRNA/L5/L18/L25 subcomplex. Contacts the 5S rRNA and the P site tRNA. Forms a bridge to the 30S subunit in the 70S ribosome.

Its function is as follows. This is one of the proteins that bind and probably mediate the attachment of the 5S RNA into the large ribosomal subunit, where it forms part of the central protuberance. In the 70S ribosome it contacts protein S13 of the 30S subunit (bridge B1b), connecting the 2 subunits; this bridge is implicated in subunit movement. Contacts the P site tRNA; the 5S rRNA and some of its associated proteins might help stabilize positioning of ribosome-bound tRNAs. This is Large ribosomal subunit protein uL5 from Prochlorococcus marinus (strain MIT 9303).